A 587-amino-acid polypeptide reads, in one-letter code: Beta-(1--&gt;2)glucan export ATP-binding/permease protein NdvA (587 aa).

Residues V21 to E301 form the ABC transmembrane type-1 domain. 6 helical membrane passes run L23–G43, P57–A77, G128–I148, L158–S178, M248–G268, and V272–M292. Positions I335–A569 constitute an ABC transporter domain. Position 368–375 (G368–T375) interacts with ATP.

Belongs to the ABC transporter superfamily. Beta-(1--&gt;2)glucan exporter (TC 3.A.1.108.1) family. As to quaternary structure, homodimer.

It localises to the cell inner membrane. It catalyses the reaction [(1-&gt;2)-beta-D-glucosyl](n)(in) + ATP + H2O = [(1-&gt;2)-beta-D-glucosyl](n)(out) + ADP + phosphate + H(+). Functionally, involved in beta-(1--&gt;2)glucan export. Transmembrane domains (TMD) form a pore in the inner membrane and the ATP-binding domain (NBD) is responsible for energy generation. The chain is Beta-(1--&gt;2)glucan export ATP-binding/permease protein NdvA from Rhizobium johnstonii (strain DSM 114642 / LMG 32736 / 3841) (Rhizobium leguminosarum bv. viciae).